The following is a 386-amino-acid chain: Tumor necrosis factor receptor superfamily member 10D (386 aa).

2 disordered regions span residues 1 to 25 (MGLWGQSVPTASSARAGRYPGARTA) and 62 to 90 (DEVPQQTVAPQQQRRSLKEEECPAGSHRS). A signal peptide spans 1–55 (MGLWGQSVPTASSARAGRYPGARTASGTRPWLLDPKILKFVVFIVAVLLPVRVDS). The Extracellular portion of the chain corresponds to 56 to 211 (ATIPRQDEVP…ILGMLASPYH (156 aa)). TNFR-Cys repeat units follow at residues 58–97 (IPRQDEVPQQTVAPQQQRRSLKEEECPAGSHRSEYTGACN), 98–139 (PCTE…DTVC), and 140–180 (QCEK…DIKC). Residues 64 to 75 (VPQQTVAPQQQR) are compositionally biased toward polar residues. Cystine bridges form between Cys83–Cys96, Cys99–Cys115, Cys118–Cys131, Cys121–Cys139, Cys141–Cys155, Cys158–Cys172, and Cys162–Cys180. N-linked (GlcNAc...) asparagine glycosylation is present at Asn127. Residue Asn182 is glycosylated (N-linked (GlcNAc...) asparagine). A helical membrane pass occupies residues 212-232 (YLIIIVVLVIILAVVVVGFSC). At 233–386 (RKKFISYLKG…DEAGSATSCL (154 aa)) the chain is on the cytoplasmic side. In terms of domain architecture, Death; truncated spans 340-366 (SADISTLLDASATLEEGHAKETIQDQL).

Widely expressed, in particular in fetal kidney, lung and liver, and in adult testis and liver. Also expressed in peripheral blood leukocytes, colon and small intestine, ovary, prostate, thymus, spleen, pancreas, kidney, lung, placenta and heart.

It is found in the membrane. Its function is as follows. Receptor for the cytotoxic ligand TRAIL. Contains a truncated death domain and hence is not capable of inducing apoptosis but protects against TRAIL-mediated apoptosis. Reports are contradictory with regards to its ability to induce the NF-kappa-B pathway. According to PubMed:9382840, it cannot but according to PubMed:9430226, it can induce the NF-kappa-B pathway. This chain is Tumor necrosis factor receptor superfamily member 10D, found in Homo sapiens (Human).